Here is a 128-residue protein sequence, read N- to C-terminus: Large ribosomal subunit protein bL21 (128 aa).

The segment at 104–128 is disordered; sequence GKTPTVGPRPKKEKVVEPAEGEGDH. The span at 116–128 shows a compositional bias: basic and acidic residues; sequence EKVVEPAEGEGDH.

The protein belongs to the bacterial ribosomal protein bL21 family. In terms of assembly, part of the 50S ribosomal subunit. Contacts protein L20.

Its function is as follows. This protein binds to 23S rRNA in the presence of protein L20. This is Large ribosomal subunit protein bL21 from Nitrobacter hamburgensis (strain DSM 10229 / NCIMB 13809 / X14).